Here is a 282-residue protein sequence, read N- to C-terminus: Insulin-like growth factor-binding protein 7 (282 aa).

Residues 1–26 form the signal peptide; it reads MERPSLRALLLGAAGLLLLLLPLSSS. The 87-residue stretch at 28 to 114 folds into the IGFBP N-terminal domain; it reads SSDTCGPCEP…PGVSGVCVCK (87 aa). 7 disulfides stabilise this stretch: cysteine 32–cysteine 57, cysteine 35–cysteine 59, cysteine 40–cysteine 60, cysteine 48–cysteine 63, cysteine 71–cysteine 87, cysteine 81–cysteine 111, and cysteine 120–cysteine 156. Residues 105-158 enclose the Kazal-like domain; that stretch reads PGVSGVCVCKSRYPVCGSDGTTYPSGCQLRAASQRAESRGEKAITQVSKGTCEQ. Positions 160-264 constitute an Ig-like C2-type domain; the sequence is PSIVTPPKDI…GQASASAKIT (105 aa). N-linked (GlcNAc...) asparagine glycosylation occurs at asparagine 171. Cysteine 181 and cysteine 248 form a disulfide bridge. Residue serine 239 is modified to Phosphoserine; by FAM20C.

May interact with VPS24/CHMP3; the relevance of such interaction however remains unclear. Interacts with CD93; this interaction plays a role in endothelial cells angiogenesis. N-glycosylated.

It localises to the secreted. Its function is as follows. Binds IGF1 and IGF2 with a relatively low affinity. Stimulates prostacyclin (PGI2) production. Stimulates cell adhesion. Acts as a ligand for CD93 to play a role in angiogenesis. This Homo sapiens (Human) protein is Insulin-like growth factor-binding protein 7 (IGFBP7).